A 254-amino-acid chain; its full sequence is Imidazole glycerol phosphate synthase subunit HisF (254 aa).

Residues aspartate 11 and aspartate 130 contribute to the active site.

It belongs to the HisA/HisF family. Heterodimer of HisH and HisF.

The protein resides in the cytoplasm. It catalyses the reaction 5-[(5-phospho-1-deoxy-D-ribulos-1-ylimino)methylamino]-1-(5-phospho-beta-D-ribosyl)imidazole-4-carboxamide + L-glutamine = D-erythro-1-(imidazol-4-yl)glycerol 3-phosphate + 5-amino-1-(5-phospho-beta-D-ribosyl)imidazole-4-carboxamide + L-glutamate + H(+). It participates in amino-acid biosynthesis; L-histidine biosynthesis; L-histidine from 5-phospho-alpha-D-ribose 1-diphosphate: step 5/9. Its function is as follows. IGPS catalyzes the conversion of PRFAR and glutamine to IGP, AICAR and glutamate. The HisF subunit catalyzes the cyclization activity that produces IGP and AICAR from PRFAR using the ammonia provided by the HisH subunit. The protein is Imidazole glycerol phosphate synthase subunit HisF of Gloeobacter violaceus (strain ATCC 29082 / PCC 7421).